We begin with the raw amino-acid sequence, 359 residues long: uncharacterized protein (359 aa).

A Protein kinase domain is found at Tyr-43–Gly-309. ATP is bound by residues Leu-49–Val-57 and Lys-72. Asp-163 functions as the Proton acceptor in the catalytic mechanism. The interval Arg-314–Pro-359 is disordered. The segment covering Gly-350 to Pro-359 has biased composition (gly residues).

This sequence belongs to the protein kinase superfamily. Ser/Thr protein kinase family. STKL subfamily.

It carries out the reaction L-seryl-[protein] + ATP = O-phospho-L-seryl-[protein] + ADP + H(+). It catalyses the reaction L-threonyl-[protein] + ATP = O-phospho-L-threonyl-[protein] + ADP + H(+). This is an uncharacterized protein from Homo sapiens (Human).